Reading from the N-terminus, the 387-residue chain is Succinate--CoA ligase [ADP-forming] subunit beta (387 aa).

Residues K9–K245 form the ATP-grasp domain. ATP contacts are provided by residues K46, G53–G55, E100, Y103, and E108. Residues N200 and D214 each contribute to the Mg(2+) site. Substrate-binding positions include N265 and G322–V324.

This sequence belongs to the succinate/malate CoA ligase beta subunit family. In terms of assembly, heterotetramer of two alpha and two beta subunits. The cofactor is Mg(2+).

The catalysed reaction is succinate + ATP + CoA = succinyl-CoA + ADP + phosphate. It catalyses the reaction GTP + succinate + CoA = succinyl-CoA + GDP + phosphate. It participates in carbohydrate metabolism; tricarboxylic acid cycle; succinate from succinyl-CoA (ligase route): step 1/1. Functionally, succinyl-CoA synthetase functions in the citric acid cycle (TCA), coupling the hydrolysis of succinyl-CoA to the synthesis of either ATP or GTP and thus represents the only step of substrate-level phosphorylation in the TCA. The beta subunit provides nucleotide specificity of the enzyme and binds the substrate succinate, while the binding sites for coenzyme A and phosphate are found in the alpha subunit. In Francisella tularensis subsp. holarctica (strain FTNF002-00 / FTA), this protein is Succinate--CoA ligase [ADP-forming] subunit beta.